A 156-amino-acid polypeptide reads, in one-letter code: Ribosome maturation factor RimP (156 aa).

Belongs to the RimP family.

It is found in the cytoplasm. Required for maturation of 30S ribosomal subunits. This Bacillus mycoides (strain KBAB4) (Bacillus weihenstephanensis) protein is Ribosome maturation factor RimP.